The primary structure comprises 495 residues: Ribosome biogenesis protein YTM1 (495 aa).

Residues 15–97 (VKVIFTTTEP…ETTLTLQYVR (83 aa)) are ubiquitin-like (UBL) domain. 7 WD repeats span residues 129-168 (WSSA…IATS), 175-213 (GHTA…HFTG), 223-262 (GHTG…APEP), 264-295 (ASLL…LWSI), 296-337 (HTAP…STLT), 386-426 (GHAN…PATK), and 458-495 (GDGC…TEQK).

This sequence belongs to the WD repeat WDR12/YTM1 family. In terms of assembly, component of the NOP7 complex, composed of ERB1, NOP7 and YTM1. The complex is held together by ERB1, which interacts with NOP7 via its N-terminal domain and with YTM1 via a high-affinity interaction between the seven-bladed beta-propeller domains of the 2 proteins. The NOP7 complex associates with the 66S pre-ribosome. Interacts (via UBL domain) with MDN1 (via VWFA/MIDAS domain).

It is found in the nucleus. The protein localises to the nucleolus. It localises to the nucleoplasm. Functionally, component of the NOP7 complex, which is required for maturation of the 25S and 5.8S ribosomal RNAs and formation of the 60S ribosome. The sequence is that of Ribosome biogenesis protein YTM1 from Chaetomium thermophilum (strain DSM 1495 / CBS 144.50 / IMI 039719) (Thermochaetoides thermophila).